The chain runs to 321 residues: Bifunctional methyltransferase/endonuclease (321 aa).

A probable methylated-DNA--protein-cysteine methyltransferase region spans residues 1–86; sequence MLSVDYENFD…PLGSAEKMRR (86 aa). The active site involves Cys61. Residues 87 to 318 form an endonuclease V region; it reads LIRDGITITN…YDFSTRNTAI (232 aa). Mg(2+) contacts are provided by Asp145 and Asp204.

In the N-terminal section; belongs to the MGMT family. The protein in the C-terminal section; belongs to the endonuclease V family. Mg(2+) is required as a cofactor.

It is found in the cytoplasm. The catalysed reaction is Endonucleolytic cleavage at apurinic or apyrimidinic sites to products with a 5'-phosphate.. Its function is as follows. DNA repair enzyme involved in the repair of deaminated bases. Selectively cleaves double-stranded DNA at the second phosphodiester bond 3' to a deoxyinosine leaving behind the intact lesion on the nicked DNA. The chain is Bifunctional methyltransferase/endonuclease from Thermoplasma volcanium (strain ATCC 51530 / DSM 4299 / JCM 9571 / NBRC 15438 / GSS1).